Reading from the N-terminus, the 312-residue chain is DNA-directed RNA polymerase subunit alpha (312 aa).

Positions 1 to 226 are alpha N-terminal domain (alpha-NTD); that stretch reads MIEFEKPIIT…EHLNLFTDLT (226 aa). Residues 243 to 312 are alpha C-terminal domain (alpha-CTD); that stretch reads DEKVLDRTIE…DLGLGLKNDK (70 aa).

It belongs to the RNA polymerase alpha chain family. As to quaternary structure, homodimer. The RNAP catalytic core consists of 2 alpha, 1 beta, 1 beta' and 1 omega subunit. When a sigma factor is associated with the core the holoenzyme is formed, which can initiate transcription.

It carries out the reaction RNA(n) + a ribonucleoside 5'-triphosphate = RNA(n+1) + diphosphate. Functionally, DNA-dependent RNA polymerase catalyzes the transcription of DNA into RNA using the four ribonucleoside triphosphates as substrates. The polypeptide is DNA-directed RNA polymerase subunit alpha (Streptococcus agalactiae serotype III (strain NEM316)).